We begin with the raw amino-acid sequence, 249 residues long: Sugar fermentation stimulation protein homolog (249 aa).

It belongs to the SfsA family.

In Rhizobium rhizogenes (strain K84 / ATCC BAA-868) (Agrobacterium radiobacter), this protein is Sugar fermentation stimulation protein homolog.